A 257-amino-acid chain; its full sequence is Type III pantothenate kinase (257 aa).

Residue 7–14 participates in ATP binding; sequence DIGNSHTV. A substrate-binding site is contributed by 106-109; sequence GTDR. Asp108 (proton acceptor) is an active-site residue. K(+) is bound at residue Asp128. Thr132 serves as a coordination point for ATP. Thr184 contributes to the substrate binding site.

The protein belongs to the type III pantothenate kinase family. In terms of assembly, homodimer. It depends on NH4(+) as a cofactor. K(+) is required as a cofactor.

Its subcellular location is the cytoplasm. It carries out the reaction (R)-pantothenate + ATP = (R)-4'-phosphopantothenate + ADP + H(+). The protein operates within cofactor biosynthesis; coenzyme A biosynthesis; CoA from (R)-pantothenate: step 1/5. Catalyzes the phosphorylation of pantothenate (Pan), the first step in CoA biosynthesis. In Nocardioides sp. (strain ATCC BAA-499 / JS614), this protein is Type III pantothenate kinase.